We begin with the raw amino-acid sequence, 606 residues long: Transcription factor glial cells missing 2 (606 aa).

Residues 20–37 (DHSQLTQFVQPQSQSTHS) show a composition bias toward polar residues. Disordered stretches follow at residues 20 to 65 (DHSQ…KGKR), 475 to 501 (EMQQ…HHYY), and 561 to 606 (TAPT…SVTH). Residues 44 to 61 (PGQQQAGGSMTMPSSSTG) show a composition bias toward low complexity. A DNA-binding region (GCM) is located at residues 65–224 (REWDINDAIV…KNSSVSKRAF (160 aa)). Polar residues predominate over residues 490-501 (FGGNQTAGHHYY). Over residues 569-580 (PGHPPPPPPPPT) the composition is skewed to pro residues. Over residues 583–593 (YHHHHHHHLHH) the composition is skewed to basic residues. The segment covering 594-606 (PAAATGLAPSVTH) has biased composition (low complexity).

Expressed in glial lineages within embryonic procephalic mesoderm. Expression is highest in hemocyte primordia and longitudinal and nerve root ganglia.

It is found in the nucleus. In terms of biological role, transcription factor with a minor role promoting glial cell differentiation and a more significant role in hematocyte differentiation. Gcm2, together with gcm, is required for the proliferation of plasmatocyte precursors, the expression of Croquemort protein, and the ability of plasmatocytes to convert into macrophages. This chain is Transcription factor glial cells missing 2 (gcm2), found in Drosophila melanogaster (Fruit fly).